Reading from the N-terminus, the 139-residue chain is Small ribosomal subunit protein uS12 (139 aa).

Positions 1–44 (MPTINQLVRKPRQSKITKSKSPALNKGYNSFKKSLTDVKSPQKR) are disordered. Residues 9–18 (RKPRQSKITK) are compositionally biased toward basic residues. A compositionally biased stretch (polar residues) spans 19-39 (SKSPALNKGYNSFKKSLTDVK). D102 carries the post-translational modification 3-methylthioaspartic acid.

This sequence belongs to the universal ribosomal protein uS12 family. In terms of assembly, part of the 30S ribosomal subunit. Contacts proteins S8 and S17. May interact with IF1 in the 30S initiation complex.

Functionally, with S4 and S5 plays an important role in translational accuracy. Interacts with and stabilizes bases of the 16S rRNA that are involved in tRNA selection in the A site and with the mRNA backbone. Located at the interface of the 30S and 50S subunits, it traverses the body of the 30S subunit contacting proteins on the other side and probably holding the rRNA structure together. The combined cluster of proteins S8, S12 and S17 appears to hold together the shoulder and platform of the 30S subunit. This chain is Small ribosomal subunit protein uS12, found in Lysinibacillus sphaericus (strain C3-41).